The following is a 40-amino-acid chain: Dolichyl-diphosphooligosaccharide--protein glycosyltransferase subunit 4 (40 aa).

Residues 1–4 (MITD) are Lumenal-facing. Residues 5 to 25 (VQLAIFSNVLGVFLFLLVVAY) form a helical membrane-spanning segment. At 26–40 (HYINANTGKPSAKAK) the chain is on the cytoplasmic side.

This sequence belongs to the OST4 family. In terms of assembly, component of the oligosaccharyltransferase (OST) complex.

The protein resides in the endoplasmic reticulum membrane. In terms of biological role, subunit of the oligosaccharyl transferase (OST) complex that catalyzes the initial transfer of a defined glycan (Glc(3)Man(9)GlcNAc(2) in eukaryotes) from the lipid carrier dolichol-pyrophosphate to an asparagine residue within an Asn-X-Ser/Thr consensus motif in nascent polypeptide chains, the first step in protein N-glycosylation. N-glycosylation occurs cotranslationally and the complex associates with the Sec61 complex at the channel-forming translocon complex that mediates protein translocation across the endoplasmic reticulum (ER). All subunits are required for a maximal enzyme activity. This Drosophila erecta (Fruit fly) protein is Dolichyl-diphosphooligosaccharide--protein glycosyltransferase subunit 4.